We begin with the raw amino-acid sequence, 445 residues long: UDP-N-acetylglucosamine--peptide N-acetylglucosaminyltransferase stabilizing protein GtfB (445 aa).

The interval 55 to 171 is glycosyltransferase 1; the sequence is KPLYFNQVPV…TLPGQSMRYF (117 aa).

The protein belongs to the GtfB family. As to quaternary structure, interacts with glycosyltransferase GtfA; probably forms a heterotetramer with 2 subunits each of GtfA and GtfB. Part of the accessory SecA2/SecY2 protein translocation apparatus.

The protein resides in the cell membrane. The protein operates within protein modification; protein glycosylation. Its function is as follows. Required for the polymorphic O-glycosylation of the serine-rich repeat protein PsrP. A stabilizing protein that is part of the accessory SecA2/SecY2 system specifically required to export serine-rich repeat cell wall proteins encoded upstream in the same operon. The GtfA-GtfB complex adds GlcNAc from UDP-GlcNAc to PsrP, attaching the first sugar residue. Stabilizes the glycosylation activity of GtfA. Has no N-acetylglucosaminyl transferase activity on its own. The protein is UDP-N-acetylglucosamine--peptide N-acetylglucosaminyltransferase stabilizing protein GtfB of Streptococcus pneumoniae serotype 4 (strain ATCC BAA-334 / TIGR4).